A 276-amino-acid chain; its full sequence is Cerberus (276 aa).

The first 20 residues, 1–20, serve as a signal peptide directing secretion; the sequence is MLLCVLKIYIIFCLVNDGAG. N103, N118, and N160 each carry an N-linked (GlcNAc...) asparagine glycan. Cystine bridges form between C175/C221, C189/C235, C199/C251, and C203/C253. The region spanning 175–259 is the CTCK domain; the sequence is CKTLPFTQNI…ECACEAHKNN (85 aa). N-linked (GlcNAc...) asparagine glycosylation is present at N234.

This sequence belongs to the DAN family. As to quaternary structure, the long chain interacts with nodal/nr-1, bmp4 and wnt8, thereby inhibiting their function. The short chain interacts with nodal/nr-1 but not bmp4 or wnt8. As to expression, expressed in the anterior endomesoderm of the early gastrula with expression expanded laterally around the margin at the endoderm/mesoderm boundary.

The protein resides in the secreted. Functionally, inhibits wnt, nodal/nr-1 and bmp signaling in the embryo to promote head formation and anterior neural induction. Within the endoderm, acts as an essential mediator of nodal/nr-1-induced cardiogenesis in the overlying mesoderm. This chain is Cerberus, found in Xenopus tropicalis (Western clawed frog).